Here is a 414-residue protein sequence, read N- to C-terminus: Patatin-like protein 1 (414 aa).

The 207-residue stretch at 22–228 (LSLDGGGVRG…TANNPTLVAM (207 aa)) folds into the PNPLA domain. The short motif at 26–31 (GGGVRG) is the GXGXXG element. The GXSXG signature appears at 64-68 (GTSTG). Serine 66 functions as the Nucleophile in the catalytic mechanism. The active-site Proton acceptor is aspartate 215. Positions 215–217 (DGA) match the DGA/G motif. Serine 399 carries the post-translational modification Phosphoserine.

The protein belongs to the patatin family. Phosphorylated at Ser-399 by CPK3. Phosphorylation enhances PLP1 activity towards phosphatidylcholine. Expressed specifically in roots and root hairs.

The protein localises to the cytoplasm. Possesses non-specific lipolytic acyl hydrolase (LAH) activity. Catalyzes the hydrolysis of the neutral lipids monogalactosyldiacylglycerol (MGDG), digalactosyldiacylglycerol (DGDG) and phosphatidylglycerol (PG), and less efficiently the polar lipids phosphatidylcholine (PC) and phosphatidylinositol (PI), but not the storage lipid triacylglycerol (TAG). May play a role in root development. The polypeptide is Patatin-like protein 1 (PLP1) (Arabidopsis thaliana (Mouse-ear cress)).